A 293-amino-acid chain; its full sequence is Bisanhydrobacterioruberin hydratase (293 aa).

7 helical membrane-spanning segments follow: residues 36-56, 66-86, 89-109, 134-154, 171-191, 199-219, and 254-274; these read IAVV…EGLL, FVLF…FPLV, RAGL…LVGV, FGLP…VLLL, ATVM…GFWI, GVPW…VLLF, and LFYT…GLLW.

Belongs to the BABR hydratase family.

It localises to the membrane. The catalysed reaction is bacterioruberin = bisanhydrobacterioruberin + 2 H2O. Its pathway is carotenoid biosynthesis. Functionally, involved in the biosynthesis of the acyclic C50 carotenoid bacterioruberin (BR). Catalyzes the reaction that introduces hydroxyl groups to C3'' and C3''' of bisanhydrobacterioruberin (BABR) to generate BR. The chain is Bisanhydrobacterioruberin hydratase from Haloarcula japonica (strain ATCC 49778 / DSM 6131 / JCM 7785 / NBRC 101032 / NCIMB 13157 / TR-1).